Reading from the N-terminus, the 240-residue chain is Ubiquinone biosynthesis O-methyltransferase (240 aa).

The S-adenosyl-L-methionine site is built by arginine 44, glycine 64, aspartate 85, and methionine 129.

The protein belongs to the methyltransferase superfamily. UbiG/COQ3 family.

It carries out the reaction a 3-demethylubiquinol + S-adenosyl-L-methionine = a ubiquinol + S-adenosyl-L-homocysteine + H(+). The enzyme catalyses a 3-(all-trans-polyprenyl)benzene-1,2-diol + S-adenosyl-L-methionine = a 2-methoxy-6-(all-trans-polyprenyl)phenol + S-adenosyl-L-homocysteine + H(+). The protein operates within cofactor biosynthesis; ubiquinone biosynthesis. O-methyltransferase that catalyzes the 2 O-methylation steps in the ubiquinone biosynthetic pathway. This chain is Ubiquinone biosynthesis O-methyltransferase, found in Escherichia coli (strain ATCC 8739 / DSM 1576 / NBRC 3972 / NCIMB 8545 / WDCM 00012 / Crooks).